We begin with the raw amino-acid sequence, 561 residues long: DNA ligase B (561 aa).

Catalysis depends on lysine 128, which acts as the N6-AMP-lysine intermediate.

The protein belongs to the NAD-dependent DNA ligase family. LigB subfamily.

It carries out the reaction NAD(+) + (deoxyribonucleotide)n-3'-hydroxyl + 5'-phospho-(deoxyribonucleotide)m = (deoxyribonucleotide)n+m + AMP + beta-nicotinamide D-nucleotide.. Catalyzes the formation of phosphodiester linkages between 5'-phosphoryl and 3'-hydroxyl groups in double-stranded DNA using NAD as a coenzyme and as the energy source for the reaction. The polypeptide is DNA ligase B (Pseudomonas syringae pv. tomato (strain ATCC BAA-871 / DC3000)).